The primary structure comprises 929 residues: Protein unc-45 homolog A (929 aa).

TPR repeat units follow at residues 6–39 (VEQL…DATP), 43–76 (AVLH…DGGD), and 77–110 (VKAL…EPKN). The residue at position 55 (Lys-55) is an N6-acetyllysine. Lys-468 carries the post-translational modification N6-acetyllysine.

As to quaternary structure, interacts with PGR isoforms A and B as well as with NR3C1 in the absence of ligand, and with HSP90AB1. Binding to HSP90AB1 involves 2 UNC45A monomers per HSP90AB1 dimer.

It localises to the cytoplasm. Its subcellular location is the perinuclear region. It is found in the nucleus. May act as co-chaperone for HSP90 (Potential). Prevents the stimulation of HSP90AB1 ATPase activity by AHSA1. Positive factor in promoting PGR function in the cell. May be necessary for proper folding of myosin (Potential). Necessary for normal cell proliferation. Necessary for normal myotube formation and myosin accumulation during muscle cell development. May play a role in erythropoiesis in stroma cells in the spleen. This is Protein unc-45 homolog A (UNC45A) from Pongo abelii (Sumatran orangutan).